The sequence spans 371 residues: Cytochrome b (371 aa).

Helical transmembrane passes span phenylalanine 25–valine 45, tryptophan 69–isoleucine 90, tryptophan 105–leucine 125, and phenylalanine 170–isoleucine 190. Heme b is bound by residues histidine 75 and histidine 89. 2 residues coordinate heme b: histidine 174 and histidine 188. Position 193 (histidine 193) interacts with a ubiquinone. Transmembrane regions (helical) follow at residues histidine 218 to phenylalanine 238, leucine 280 to histidine 300, leucine 312 to threonine 332, and phenylalanine 339 to proline 358.

Belongs to the cytochrome b family. As to quaternary structure, the cytochrome bc1 complex contains 3 respiratory subunits (MT-CYB, CYC1 and UQCRFS1), 2 core proteins (UQCRC1 and UQCRC2) and probably 6 low-molecular weight proteins. The cofactor is heme b.

Its subcellular location is the mitochondrion inner membrane. Component of the ubiquinol-cytochrome c reductase complex (complex III or cytochrome b-c1 complex) that is part of the mitochondrial respiratory chain. The b-c1 complex mediates electron transfer from ubiquinol to cytochrome c. Contributes to the generation of a proton gradient across the mitochondrial membrane that is then used for ATP synthesis. This is Cytochrome b (MT-CYB) from Aspidites melanocephalus (Black-headed python).